The following is a 109-amino-acid chain: uncharacterized protein (109 aa).

A disordered region spans residues 36–109; it reads NSSNNLNNNN…KKKKKKRRVK (74 aa). Residues 39 to 88 show a composition bias toward low complexity; the sequence is NNLNNNNFNENNLKNNNNRNGNNNNNNNNNNNNNNNNNNNNNNNNNNNNN. The segment covering 99 to 109 has biased composition (basic residues); it reads QKKKKKKRRVK.

This is an uncharacterized protein from Dictyostelium discoideum (Social amoeba).